Consider the following 547-residue polypeptide: Chaperonin GroEL (547 aa).

Residues 30-33 (TLGP), 87-91 (DGTTT), Gly-414, 478-480 (DAL), and Asp-494 contribute to the ATP site.

This sequence belongs to the chaperonin (HSP60) family. As to quaternary structure, forms a cylinder of 14 subunits composed of two heptameric rings stacked back-to-back. Interacts with the co-chaperonin GroES.

It localises to the cytoplasm. It catalyses the reaction ATP + H2O + a folded polypeptide = ADP + phosphate + an unfolded polypeptide.. Its function is as follows. Together with its co-chaperonin GroES, plays an essential role in assisting protein folding. The GroEL-GroES system forms a nano-cage that allows encapsulation of the non-native substrate proteins and provides a physical environment optimized to promote and accelerate protein folding. The sequence is that of Chaperonin GroEL from Desulforudis audaxviator (strain MP104C).